The sequence spans 149 residues: Large ribosomal subunit protein uL15 (149 aa).

Composition is skewed to basic residues over residues Met-1–His-14 and Arg-21–Gly-30. The segment at Met-1–His-39 is disordered. Short sequence motifs (nuclear localization signal) lie at residues Lys-7 to Gly-13 and Lys-24 to Gly-30. Lys-96 is covalently cross-linked (Glycyl lysine isopeptide (Lys-Gly) (interchain with G-Cter in ubiquitin)).

Belongs to the universal ribosomal protein uL15 family. Component of the large ribosomal subunit (LSU). Mature yeast ribosomes consist of a small (40S) and a large (60S) subunit. The 40S small subunit contains 1 molecule of ribosomal RNA (18S rRNA) and 33 different proteins (encoded by 57 genes). The large 60S subunit contains 3 rRNA molecules (25S, 5.8S and 5S rRNA) and 46 different proteins (encoded by 81 genes).

Its subcellular location is the cytoplasm. In terms of biological role, component of the ribosome, a large ribonucleoprotein complex responsible for the synthesis of proteins in the cell. The small ribosomal subunit (SSU) binds messenger RNAs (mRNAs) and translates the encoded message by selecting cognate aminoacyl-transfer RNA (tRNA) molecules. The large subunit (LSU) contains the ribosomal catalytic site termed the peptidyl transferase center (PTC), which catalyzes the formation of peptide bonds, thereby polymerizing the amino acids delivered by tRNAs into a polypeptide chain. The nascent polypeptides leave the ribosome through a tunnel in the LSU and interact with protein factors that function in enzymatic processing, targeting, and the membrane insertion of nascent chains at the exit of the ribosomal tunnel. In Saccharomyces cerevisiae (strain ATCC 204508 / S288c) (Baker's yeast), this protein is Large ribosomal subunit protein uL15.